The primary structure comprises 263 residues: Oxygen-evolving enhancer protein 2, chloroplastic (263 aa).

The transit peptide at 1 to 78 (MAAASCFHAL…VGTKVSPADA (78 aa)) directs the protein to the chloroplast. The span at 14 to 30 (ARSSSSSLQSSSSRLPA) shows a compositional bias: low complexity. Positions 14–34 (ARSSSSSLQSSSSRLPAPIKP) are disordered.

It belongs to the PsbP family.

Its subcellular location is the plastid. The protein resides in the chloroplast thylakoid membrane. May be involved in the regulation of photosystem II. The chain is Oxygen-evolving enhancer protein 2, chloroplastic from Helianthus annuus (Common sunflower).